The sequence spans 248 residues: Triosephosphate isomerase (248 aa).

Asn10 and Lys12 together coordinate substrate. Catalysis depends on His95, which acts as the Electrophile. Residue Glu165 is the Proton acceptor of the active site.

It belongs to the triosephosphate isomerase family. In terms of assembly, homodimer.

The protein resides in the cytoplasm. The enzyme catalyses D-glyceraldehyde 3-phosphate = dihydroxyacetone phosphate. It participates in carbohydrate biosynthesis; gluconeogenesis. Its pathway is carbohydrate degradation; glycolysis; D-glyceraldehyde 3-phosphate from glycerone phosphate: step 1/1. The polypeptide is Triosephosphate isomerase (TPI1) (Candida albicans (strain SC5314 / ATCC MYA-2876) (Yeast)).